The primary structure comprises 1379 residues: DNA-directed RNA polymerase subunit beta (1379 aa).

This sequence belongs to the RNA polymerase beta chain family. In plastids the minimal PEP RNA polymerase catalytic core is composed of four subunits: alpha, beta, beta', and beta''. When a (nuclear-encoded) sigma factor is associated with the core the holoenzyme is formed, which can initiate transcription.

It localises to the plastid. The protein resides in the chloroplast. The catalysed reaction is RNA(n) + a ribonucleoside 5'-triphosphate = RNA(n+1) + diphosphate. Its function is as follows. DNA-dependent RNA polymerase catalyzes the transcription of DNA into RNA using the four ribonucleoside triphosphates as substrates. This is DNA-directed RNA polymerase subunit beta from Trieres chinensis (Marine centric diatom).